Reading from the N-terminus, the 158-residue chain is NAD(P)H-quinone oxidoreductase subunit J, chloroplastic (158 aa).

This sequence belongs to the complex I 30 kDa subunit family. As to quaternary structure, NDH is composed of at least 16 different subunits, 5 of which are encoded in the nucleus.

The protein resides in the plastid. The protein localises to the chloroplast thylakoid membrane. It catalyses the reaction a plastoquinone + NADH + (n+1) H(+)(in) = a plastoquinol + NAD(+) + n H(+)(out). It carries out the reaction a plastoquinone + NADPH + (n+1) H(+)(in) = a plastoquinol + NADP(+) + n H(+)(out). In terms of biological role, NDH shuttles electrons from NAD(P)H:plastoquinone, via FMN and iron-sulfur (Fe-S) centers, to quinones in the photosynthetic chain and possibly in a chloroplast respiratory chain. The immediate electron acceptor for the enzyme in this species is believed to be plastoquinone. Couples the redox reaction to proton translocation, and thus conserves the redox energy in a proton gradient. The protein is NAD(P)H-quinone oxidoreductase subunit J, chloroplastic of Gossypium barbadense (Sea Island cotton).